The sequence spans 611 residues: DNA mismatch repair protein MutL (611 aa).

Belongs to the DNA mismatch repair MutL/HexB family.

This protein is involved in the repair of mismatches in DNA. It is required for dam-dependent methyl-directed DNA mismatch repair. May act as a 'molecular matchmaker', a protein that promotes the formation of a stable complex between two or more DNA-binding proteins in an ATP-dependent manner without itself being part of a final effector complex. The protein is DNA mismatch repair protein MutL of Borrelia garinii subsp. bavariensis (strain ATCC BAA-2496 / DSM 23469 / PBi) (Borreliella bavariensis).